The sequence spans 264 residues: Glyceraldehyde-3-phosphate dehydrogenase (264 aa).

Positions 45 and 93 each coordinate NAD(+). D-glyceraldehyde 3-phosphate contacts are provided by residues 123 to 125 (SCT) and Thr154. Cys124 serves as the catalytic Nucleophile. Residue Asn155 coordinates NAD(+). D-glyceraldehyde 3-phosphate is bound by residues Arg169, 182 to 183 (TG), and Arg205. A disordered region spans residues 245–264 (GILGYTEDPXVSSDXKGNSH).

It belongs to the glyceraldehyde-3-phosphate dehydrogenase family. In terms of assembly, homotetramer.

It is found in the cytoplasm. The enzyme catalyses D-glyceraldehyde 3-phosphate + phosphate + NAD(+) = (2R)-3-phospho-glyceroyl phosphate + NADH + H(+). Its pathway is carbohydrate degradation; glycolysis; pyruvate from D-glyceraldehyde 3-phosphate: step 1/5. Functionally, catalyzes the oxidative phosphorylation of glyceraldehyde 3-phosphate (G3P) to 1,3-bisphosphoglycerate (BPG) using the cofactor NAD. The first reaction step involves the formation of a hemiacetal intermediate between G3P and a cysteine residue, and this hemiacetal intermediate is then oxidized to a thioester, with concomitant reduction of NAD to NADH. The reduced NADH is then exchanged with the second NAD, and the thioester is attacked by a nucleophilic inorganic phosphate to produce BPG. The protein is Glyceraldehyde-3-phosphate dehydrogenase (gap) of Borrelia hermsii.